The sequence spans 461 residues: Pyruvate kinase (461 aa).

Arginine 46 provides a ligand contact to substrate. The K(+) site is built by asparagine 48 and aspartate 80. 48-51 (NLAH) provides a ligand contact to ATP. Residues arginine 87 and lysine 165 each contribute to the ATP site. Glutamate 232 lines the Mg(2+) pocket. The substrate site is built by glycine 255, aspartate 256, and threonine 288. Aspartate 256 provides a ligand contact to Mg(2+).

The protein belongs to the pyruvate kinase family. Homotetramer. The cofactor is a divalent metal cation.

The catalysed reaction is pyruvate + ATP = phosphoenolpyruvate + ADP + H(+). It functions in the pathway carbohydrate degradation; glycolysis; pyruvate from D-glyceraldehyde 3-phosphate: step 5/5. Its activity is regulated as follows. Not activated by classical allosteric effectors. In Pyrobaculum aerophilum (strain ATCC 51768 / DSM 7523 / JCM 9630 / CIP 104966 / NBRC 100827 / IM2), this protein is Pyruvate kinase (pyk).